Reading from the N-terminus, the 292-residue chain is F-box protein SKIP28 (292 aa).

The F-box; degenerate domain occupies 21-79 (LIVLPYLHSLFELLSMIRVSRSLRDAIRDETALWTKLVIEPPLSSRLTDDILSEFSSKS).

Part of a SCF (ASK-cullin-F-box) protein ligase complex. Interacts with SKP1A/ASK1 and CUL1.

Its pathway is protein modification; protein ubiquitination. In terms of biological role, component of SCF(ASK-cullin-F-box) E3 ubiquitin ligase complexes, which may mediate the ubiquitination and subsequent proteasomal degradation of target proteins. Required during the endosperm development in embryos. The polypeptide is F-box protein SKIP28 (SKIP28) (Arabidopsis thaliana (Mouse-ear cress)).